Consider the following 466-residue polypeptide: Cysteine--tRNA ligase (466 aa).

Residue cysteine 28 participates in Zn(2+) binding. The 'HIGH' region signature appears at 30 to 40; it reads PTVYNFFHIGN. 3 residues coordinate Zn(2+): cysteine 208, histidine 233, and glutamate 237. A 'KMSKS' region motif is present at residues 265–269; the sequence is KMSKS. Lysine 268 serves as a coordination point for ATP.

It belongs to the class-I aminoacyl-tRNA synthetase family. In terms of assembly, monomer. Zn(2+) is required as a cofactor.

Its subcellular location is the cytoplasm. It carries out the reaction tRNA(Cys) + L-cysteine + ATP = L-cysteinyl-tRNA(Cys) + AMP + diphosphate. This Clostridium perfringens (strain ATCC 13124 / DSM 756 / JCM 1290 / NCIMB 6125 / NCTC 8237 / Type A) protein is Cysteine--tRNA ligase.